The chain runs to 58 residues: uncharacterized protein (58 aa).

This is an uncharacterized protein from Yersinia enterocolitica.